A 510-amino-acid chain; its full sequence is MIWHVQNENFILDSTRIFMKAFHLLLFDGSFIFPECILIFGLILLLMIDSTSDQKDIPWLYFISSTSLVMSITALLFRWREEPMISFSGNFQTNNFNEIFQFLILLCSTLCIPLSVEYIECTEMAIAEFLLFVLTATLGGMFLCGANDLITIFVAPECFSLCSYLLSGYTKKDVRSNEATTKYLLMGGASSSILVHGFSWLYGSSGGEIELQEIVNGLINTQMYNSPGISIALIFITVGIGFKLSPAPSHQWTPDVYEGSPTPVVAFLSVTSKVAASASATRIFDIPFYFSSNEWHLLLEILAILSMILGNLIAITQTSMKRMLAYSSIGQIGYVIIGIIVGDSNGGYASMITYMLFYISMNLGTFACIVLFGLRTGTDNIRDYAGLYTKDPFLALSLALCLLSLGGLPPLAGFFGKLHLFWCGWQAGLYFLVSIGLLTSVVSIYYYLKIIKLLMTGRNQEITPHVRNYRRSPLRSNNSIELSMIVCVIASTIPGISMNPIIAIAQDTLF.

The next 13 helical transmembrane spans lie at 24–44 (LLLF…GLIL), 57–77 (IPWL…ALLF), 99–119 (IFQF…VEYI), 124–144 (MAIA…MFLC), 149–169 (LITI…LSGY), 183–203 (YLLM…WLYG), 227–247 (PGIS…LSPA), 295–315 (WHLL…LIAI), 323–343 (MLAY…IVGD), 354–374 (YMLF…LFGL), 395–415 (ALSL…AGFF), 418–438 (LHLF…IGLL), and 484–504 (MIVC…IIAI).

It belongs to the complex I subunit 2 family. In terms of assembly, NDH is composed of at least 16 different subunits, 5 of which are encoded in the nucleus.

It localises to the plastid. The protein localises to the chloroplast thylakoid membrane. It catalyses the reaction a plastoquinone + NADH + (n+1) H(+)(in) = a plastoquinol + NAD(+) + n H(+)(out). The catalysed reaction is a plastoquinone + NADPH + (n+1) H(+)(in) = a plastoquinol + NADP(+) + n H(+)(out). In terms of biological role, NDH shuttles electrons from NAD(P)H:plastoquinone, via FMN and iron-sulfur (Fe-S) centers, to quinones in the photosynthetic chain and possibly in a chloroplast respiratory chain. The immediate electron acceptor for the enzyme in this species is believed to be plastoquinone. Couples the redox reaction to proton translocation, and thus conserves the redox energy in a proton gradient. This chain is NAD(P)H-quinone oxidoreductase subunit 2 B, chloroplastic, found in Gossypium hirsutum (Upland cotton).